The chain runs to 190 residues: Peptidoglycan recognition protein 1 (190 aa).

The first 21 residues, 1-21 (MSRRYTPLAWVLLALLGLGAA), serve as a signal peptide directing secretion. Residue Gln-22 is modified to Pyrrolidone carboxylic acid. Disulfide bonds link Cys-24/Cys-148, Cys-40/Cys-85, and Cys-61/Cys-67. Residues 46-174 (QPVRYVVVSH…RDVQQTLSPG (129 aa)) form the N-acetylmuramoyl-L-alanine amidase domain.

It belongs to the N-acetylmuramoyl-L-alanine amidase 2 family. Homodimer; disulfide-linked.

The protein localises to the secreted. It is found in the cytoplasmic granule. Its function is as follows. Innate immunity protein that plays several important functions in antimicrobial and antitumor defense systems. Acts as a pattern receptor that binds to murein peptidoglycans (PGN) of Gram-positive bacteria and thus provides bactericidal activity. Forms an equimolar complex with heat shock protein HSPA1A and induces programmed cell death through apoptosis and necroptosis in tumor cell lines by activating the TNFR1 receptor on the target cell membrane. In addition, acts in complex with the Ca(2+)-binding protein S100A4 as a chemoattractant able to induce lymphocyte movement. Mechanistically, this complex acts as a ligand of the chemotactic receptors CCR5 and CXCR3 which are present on the cells of the immune system. Promotes also the activation of lymphocytes that become able to kill virus-infected cells as well as tumor cells by modulating the spectrum of their target-cell specificity. Induction of cytotoxicity on monocyte surface requires interaction with TREM1 receptor. The chain is Peptidoglycan recognition protein 1 (PGLYRP1) from Bos indicus (Zebu).